We begin with the raw amino-acid sequence, 210 residues long: 3,4-dihydroxy-2-butanone 4-phosphate synthase (210 aa).

D-ribulose 5-phosphate is bound by residues 33 to 34 (RE), D38, 146 to 150 (RRGHT), and E170. E34 provides a ligand contact to Mg(2+). Mg(2+) is bound at residue H149.

It belongs to the DHBP synthase family. As to quaternary structure, homodimer. Mg(2+) serves as cofactor. The cofactor is Mn(2+).

It catalyses the reaction D-ribulose 5-phosphate = (2S)-2-hydroxy-3-oxobutyl phosphate + formate + H(+). The protein operates within cofactor biosynthesis; riboflavin biosynthesis; 2-hydroxy-3-oxobutyl phosphate from D-ribulose 5-phosphate: step 1/1. Its function is as follows. Catalyzes the conversion of D-ribulose 5-phosphate to formate and 3,4-dihydroxy-2-butanone 4-phosphate. The sequence is that of 3,4-dihydroxy-2-butanone 4-phosphate synthase from Chromobacterium violaceum (strain ATCC 12472 / DSM 30191 / JCM 1249 / CCUG 213 / NBRC 12614 / NCIMB 9131 / NCTC 9757 / MK).